The following is a 429-amino-acid chain: MTEIINVTAREILDSRGNPTVEVEVAVGTGDVGRAAVPSGASTGEHEALELRDGDKGRYLGKGVRKAVANVIDEIAPAVVGLDASDQASLDARMIALDGTPTKSKLGANAILGVSLAAAKAAATAHGLPLYRYVGGAGARTLPVPLMNILNGGAHADSNVDIQEFMVVPLGLPTFAEALRCGAEIFHALKKVLKGKGAATGVGDEGGYAPSLASNEEALAVIMEAIGQAGYEPGKQVALALDCAASEFYDKKAGKYELEGEGKRFDGKGLVEYYAQLAAKYPIVSIEDGCDEDDWATWKLLTERLGGKLQLVGDDLFVTNVTRLARGIEQGVTNSILVKVNQIGSLTETLEAVRMAHRAGYTTVMSHRSGETEDTTIADLAVACDCGQIKTGSASRTDRIAKYNQLLRIEEELGGSGRYAGRSAFKALR.

Glutamine 163 provides a ligand contact to (2R)-2-phosphoglycerate. Residue glutamate 205 is the Proton donor of the active site. Mg(2+) contacts are provided by aspartate 242, glutamate 287, and aspartate 314. Residues lysine 339, arginine 368, serine 369, and lysine 390 each coordinate (2R)-2-phosphoglycerate. Lysine 339 (proton acceptor) is an active-site residue.

It belongs to the enolase family. Requires Mg(2+) as cofactor.

It is found in the cytoplasm. It localises to the secreted. The protein resides in the cell surface. It catalyses the reaction (2R)-2-phosphoglycerate = phosphoenolpyruvate + H2O. It participates in carbohydrate degradation; glycolysis; pyruvate from D-glyceraldehyde 3-phosphate: step 4/5. In terms of biological role, catalyzes the reversible conversion of 2-phosphoglycerate (2-PG) into phosphoenolpyruvate (PEP). It is essential for the degradation of carbohydrates via glycolysis. The protein is Enolase of Anaeromyxobacter dehalogenans (strain 2CP-1 / ATCC BAA-258).